The sequence spans 982 residues: Serine/threonine-protein kinase SULU (982 aa).

Residues 30-289 enclose the Protein kinase domain; sequence YQDLREIGHG…AEECFRHPFI (260 aa). Residues 36–44 and Lys-59 contribute to the ATP site; that span reads IGHGSFGAV. The Proton acceptor role is filled by Asp-153. Disordered regions lie at residues 331–484, 592–620, 751–789, and 957–982; these read GKEG…PLDT, QNNE…QNQQ, LETQ…RDLK, and RTGS…QMAM. A compositionally biased stretch (low complexity) spans 353-373; the sequence is SIGRAGDSASSRSASLTSFRS. Polar residues predominate over residues 421–431; the sequence is QMLSSTSTSGV. A compositionally biased stretch (low complexity) spans 459–472; the sequence is IPTSQPTSKSESSS. The segment covering 595-608 has biased composition (basic and acidic residues); the sequence is ELDKRKKDIEDGEK. A compositionally biased stretch (polar residues) spans 759–768; sequence SASQNEYTQR. Over residues 957-967 the composition is skewed to low complexity; the sequence is RTGSTSRSSGG. Residues 973 to 982 show a composition bias toward polar residues; that stretch reads GNSSSIQMAM.

Belongs to the protein kinase superfamily. Ser/Thr protein kinase family. STE20 subfamily. The cofactor is Mg(2+). Expressed in the pharynx, including the pharyngeal muscle of the metacorpus, the isthmus, and the terminal bulb; in the intestine, including the pharyngeointestinal valve between the pharynx and the intestine, a structure near the anus likely to be the anal sphincter and the excretory cell and in several ring neurons.

It localises to the cytoplasm. It is found in the cytoskeleton. Its subcellular location is the cell cortex. It catalyses the reaction L-seryl-[protein] + ATP = O-phospho-L-seryl-[protein] + ADP + H(+). The catalysed reaction is L-threonyl-[protein] + ATP = O-phospho-L-threonyl-[protein] + ADP + H(+). Its function is as follows. Acts as a negative regulator of cortical contractions during early embryonic cell division, possibly by regulating rho-1-dependent actomyosin contractility. Plays a role in polarity establishment in early embryos by regulating the size of the anterior and posterior cortex in the first asymmetric cell division. Might play a role in cell cycle progression. In the germline, involved in the regulation of meiotic progression during oogenesis, possibly by modulating the timing of mpk-1 activation. Plays a role in meiotic recombination events. Involved in pharyngeal pumping. This chain is Serine/threonine-protein kinase SULU (kin-18), found in Caenorhabditis elegans.